Reading from the N-terminus, the 872-residue chain is Cilia- and flagella-associated protein 58 (872 aa).

Coiled-coil stretches lie at residues 106 to 595 and 642 to 839; these read VDSA…ADGE and ESQY…QKNK.

Belongs to the CFAP58 family. In terms of assembly, interacts with ODFP2.

It localises to the cell projection. Its subcellular location is the cilium. It is found in the flagellum. The protein resides in the cytoplasm. The protein localises to the cytoskeleton. It localises to the microtubule organizing center. Its subcellular location is the centrosome. Has an essential role in the assembly and organization of the sperm flagellar axoneme. Required for the elongation of the primary cilium and sperm flagellar midpiece via modulation of the Notch signaling pathway. This chain is Cilia- and flagella-associated protein 58, found in Homo sapiens (Human).